Consider the following 62-residue polypeptide: Light-harvesting protein B-870 alpha chain (62 aa).

Position 1 is an N-formylmethionine (Met1). Topologically, residues 1–12 are cytoplasmic; sequence MWRIWQLFDPRQ. Residues 13 to 33 form a helical membrane-spanning segment; it reads ALVGLATFLFVLALLIHFILL. His29 is a binding site for a bacteriochlorophyll. At 34 to 52 the chain is on the periplasmic side; the sequence is STERFNWLEGASTKPVQTS. Residues 53–62 constitute a propeptide that is removed on maturation; that stretch reads MVMPSSDLAV.

It belongs to the antenna complex alpha subunit family. In terms of assembly, the core complex is formed by different alpha and beta chains, binding bacteriochlorophyll molecules, and arranged most probably in tetrameric structures disposed around the reaction center. The non-pigmented gamma chains may constitute additional components.

The protein resides in the cell inner membrane. Functionally, antenna complexes are light-harvesting systems, which transfer the excitation energy to the reaction centers. The protein is Light-harvesting protein B-870 alpha chain of Rhodospirillum rubrum.